We begin with the raw amino-acid sequence, 474 residues long: MCVICFVKALVHVFKIYLTANYSYNFRSWPVDFRWDDLHAPSTGNSSQRALTCAAAAAGVWLLHDAALGGDTLTRPPRGARSQVQCLLQQIRELPSQLASYALAHSLGRWLVYPGSMFLMTRALMPLLQQGQERLVDRYRGRRAKLVACDGNEIDTMFMDRRQHPGSHGRGLCLVICCEGNAGFYEMGCLSAPLEAGYSVLGWNHPGFGGSTGAPFPQHDANAMDVVVKYALHRLNFPPAHVVVYGWSIGGFTATWATMTYPELGALVLDATFDDLVPLALKVMPQSWKGLVVRTVREHFNLNVAEQLCCYPGPVLLLRRTQDDVVSTSNHIPSMPSCQVEGDVEGNRGNELLLRLLQHRYPSVMAREGRTVVTRWLRASNLAQETALYARYRVDDEWCLATLRSYRERCQKELDDAEAWGPHGLSFPWFVGQGLSARRRRQLALFLARRHLKNLEATHCSPLEPEDFQLPWRL.

Positions 175-295 constitute an AB hydrolase-1 domain; that stretch reads VICCEGNAGF…QSWKGLVVRT (121 aa). Catalysis depends on charge relay system residues Ser-248, Asp-323, and His-423.

The protein belongs to the AB hydrolase superfamily. ABHD16 family. As to expression, expressed in most tissues, with highest expression found in the testes, skeletal muscle, and brown adipose tissue.

It carries out the reaction a 1,2-diacyl-sn-glycero-3-phospho-L-serine + H2O = a 2-acyl-sn-glycero-3-phospho-L-serine + a fatty acid + H(+). The enzyme catalyses a 1-acylglycerol + H2O = glycerol + a fatty acid + H(+). The catalysed reaction is 1-(9Z-octadecenoyl)-glycerol + H2O = glycerol + (9Z)-octadecenoate + H(+). Its function is as follows. Hydrolyzes the sn-1 position of glycerophospholipids with high specificity towards phosphatidylserine (PS), PS-PLA1 enzyme. Also hydrolyzes the acyl chain of glycerolipids with a preference for the monoacylglycerol (MAG) 1-acylglycerol, MAG lipase. Plays a regulatory role in cellular lipid homeostasis by modulating genes involved in neutral lipid degradation and in phospholipid synthesis and composition. The polypeptide is ABHD16B (Mus musculus (Mouse)).